The primary structure comprises 363 residues: 3-isopropylmalate dehydrogenase (363 aa).

78–91 (GKKWDTLPINERPE) lines the NAD(+) pocket. The substrate site is built by Arg-99, Arg-109, Arg-138, and Asp-227. Mg(2+)-binding residues include Asp-227, Asp-251, and Asp-255. NAD(+) is bound at residue 285–297 (GSAPDIQGKNIAN).

This sequence belongs to the isocitrate and isopropylmalate dehydrogenases family. LeuB type 1 subfamily. Homodimer. Mg(2+) serves as cofactor. Requires Mn(2+) as cofactor.

Its subcellular location is the cytoplasm. It carries out the reaction (2R,3S)-3-isopropylmalate + NAD(+) = 4-methyl-2-oxopentanoate + CO2 + NADH. The protein operates within amino-acid biosynthesis; L-leucine biosynthesis; L-leucine from 3-methyl-2-oxobutanoate: step 3/4. Functionally, catalyzes the oxidation of 3-carboxy-2-hydroxy-4-methylpentanoate (3-isopropylmalate) to 3-carboxy-4-methyl-2-oxopentanoate. The product decarboxylates to 4-methyl-2 oxopentanoate. The sequence is that of 3-isopropylmalate dehydrogenase from Buchnera aphidicola subsp. Diuraphis noxia.